Reading from the N-terminus, the 147-residue chain is Hemoglobin subunit epsilon (147 aa).

The 145-residue stretch at 3-147 folds into the Globin domain; sequence HFTAEEKAAV…VAIALAHKYH (145 aa). A phosphoserine mark is found at serine 14 and serine 51. The heme b site is built by histidine 64 and histidine 93.

It belongs to the globin family. In terms of assembly, heterotetramer of two alpha chains and two epsilon chains in early embryonic hemoglobin Gower-2; two zeta chains and two epsilon chains in early embryonic hemoglobin Gower-1. As to expression, red blood cells.

Its function is as follows. The epsilon chain is a beta-type chain of early mammalian embryonic hemoglobin. The protein is Hemoglobin subunit epsilon (HBE1) of Pan paniscus (Pygmy chimpanzee).